We begin with the raw amino-acid sequence, 75 residues long: Protein TM_1420 (75 aa).

Positions 6, 11, 39, and 43 each coordinate [2Fe-2S] cluster.

[2Fe-2S] cluster is required as a cofactor.

Its function is as follows. Might be part of a multi-protein complex, possibly involved in metal cluster assembly. The protein is Protein TM_1420 of Thermotoga maritima (strain ATCC 43589 / DSM 3109 / JCM 10099 / NBRC 100826 / MSB8).